We begin with the raw amino-acid sequence, 421 residues long: Glutamyl-tRNA reductase (421 aa).

Residues 49 to 52 (TCNR), Ser-109, 114 to 116 (EPQ), and Gln-120 each bind substrate. The Nucleophile role is filled by Cys-50. 189 to 194 (GAGKMS) contributes to the NADP(+) binding site.

It belongs to the glutamyl-tRNA reductase family. As to quaternary structure, homodimer.

The enzyme catalyses (S)-4-amino-5-oxopentanoate + tRNA(Glu) + NADP(+) = L-glutamyl-tRNA(Glu) + NADPH + H(+). It participates in porphyrin-containing compound metabolism; protoporphyrin-IX biosynthesis; 5-aminolevulinate from L-glutamyl-tRNA(Glu): step 1/2. Its function is as follows. Catalyzes the NADPH-dependent reduction of glutamyl-tRNA(Glu) to glutamate 1-semialdehyde (GSA). This is Glutamyl-tRNA reductase from Solibacter usitatus (strain Ellin6076).